A 222-amino-acid polypeptide reads, in one-letter code: Chorionic somatomammotropin hormone-like 1 (222 aa).

An N-terminal signal peptide occupies residues 1-26; that stretch reads MAAGSRTSLLLAFALLCLPWLQEAGA. Residues histidine 44 and glutamate 205 each coordinate Zn(2+). Cysteines 213 and 220 form a disulfide.

It belongs to the somatotropin/prolactin family.

Its subcellular location is the secreted. In terms of biological role, may be a novel gestational hormone required to compensate for absence of other members of the GH/CS cluster during gestation. The protein is Chorionic somatomammotropin hormone-like 1 (CSHL1) of Homo sapiens (Human).